We begin with the raw amino-acid sequence, 154 residues long: Aspartate 1-decarboxylase 1 (154 aa).

The Schiff-base intermediate with substrate; via pyruvic acid role is filled by Ser-26. Ser-26 is modified (pyruvic acid (Ser)). Residue Thr-58 participates in substrate binding. Catalysis depends on Tyr-59, which acts as the Proton donor. Residue 74–76 (GAA) participates in substrate binding. The interval 129 to 154 (VGLVRGDTNSPQPSLSEQAGDPRRAQ) is disordered. Over residues 135 to 145 (DTNSPQPSLSE) the composition is skewed to polar residues.

Belongs to the PanD family. In terms of assembly, heterooctamer of four alpha and four beta subunits. Requires pyruvate as cofactor. In terms of processing, is synthesized initially as an inactive proenzyme, which is activated by self-cleavage at a specific serine bond to produce a beta-subunit with a hydroxyl group at its C-terminus and an alpha-subunit with a pyruvoyl group at its N-terminus.

It localises to the cytoplasm. The enzyme catalyses L-aspartate + H(+) = beta-alanine + CO2. It participates in cofactor biosynthesis; (R)-pantothenate biosynthesis; beta-alanine from L-aspartate: step 1/1. Functionally, catalyzes the pyruvoyl-dependent decarboxylation of aspartate to produce beta-alanine. This chain is Aspartate 1-decarboxylase 1, found in Frankia casuarinae (strain DSM 45818 / CECT 9043 / HFP020203 / CcI3).